We begin with the raw amino-acid sequence, 392 residues long: Cell division protein FtsZ (392 aa).

GTP is bound by residues 24-28, 111-113, Glu142, Arg145, and Asp189; these read GGGCN and GTG.

It belongs to the FtsZ family. As to quaternary structure, homodimer. Polymerizes to form a dynamic ring structure in a strictly GTP-dependent manner. Interacts directly with several other division proteins.

The protein localises to the cytoplasm. In terms of biological role, essential cell division protein that forms a contractile ring structure (Z ring) at the future cell division site. The regulation of the ring assembly controls the timing and the location of cell division. One of the functions of the FtsZ ring is to recruit other cell division proteins to the septum to produce a new cell wall between the dividing cells. Binds GTP and shows GTPase activity. In Neisseria meningitidis serogroup A / serotype 4A (strain DSM 15465 / Z2491), this protein is Cell division protein FtsZ.